We begin with the raw amino-acid sequence, 201 residues long: Protocatechuate 3,4-dioxygenase alpha chain (201 aa).

Arginine 134 contacts 3,4-dihydroxybenzoate.

It belongs to the intradiol ring-cleavage dioxygenase family. The enzyme is an oligomer of 12 copies of the alpha and beta chains. Fe(3+) is required as a cofactor.

It catalyses the reaction 3,4-dihydroxybenzoate + O2 = 3-carboxy-cis,cis-muconate + 2 H(+). It participates in aromatic compound metabolism; beta-ketoadipate pathway; 3-carboxy-cis,cis-muconate from 3,4-dihydroxybenzoate: step 1/1. In terms of biological role, plays an essential role in the utilization of numerous aromatic and hydroaromatic compounds via the beta-ketoadipate pathway. The protein is Protocatechuate 3,4-dioxygenase alpha chain (pcaG) of Pseudomonas putida (Arthrobacter siderocapsulatus).